Here is a 453-residue protein sequence, read N- to C-terminus: Ribosomal protein uS12 methylthiotransferase RimO (453 aa).

Residues 9-124 (PKVGFVSLGC…VMEAVHTHLP (116 aa)) enclose the MTTase N-terminal domain. Cys-18, Cys-54, Cys-83, Cys-155, Cys-159, and Cys-162 together coordinate [4Fe-4S] cluster. The Radical SAM core domain maps to 141–382 (LTPKHYAYLK…MEVAERVSAR (242 aa)). The TRAM domain occupies 385 to 453 (QRKVGKSLRV…ADGHDLWGEV (69 aa)).

Belongs to the methylthiotransferase family. RimO subfamily. [4Fe-4S] cluster serves as cofactor.

The protein localises to the cytoplasm. It carries out the reaction L-aspartate(89)-[ribosomal protein uS12]-hydrogen + (sulfur carrier)-SH + AH2 + 2 S-adenosyl-L-methionine = 3-methylsulfanyl-L-aspartate(89)-[ribosomal protein uS12]-hydrogen + (sulfur carrier)-H + 5'-deoxyadenosine + L-methionine + A + S-adenosyl-L-homocysteine + 2 H(+). Catalyzes the methylthiolation of an aspartic acid residue of ribosomal protein uS12. The protein is Ribosomal protein uS12 methylthiotransferase RimO of Ralstonia pickettii (strain 12J).